A 338-amino-acid chain; its full sequence is D-erythrose-4-phosphate dehydrogenase (338 aa).

NAD(+) is bound at residue 11–12 (RI). Substrate-binding positions include 153-155 (SCT), R199, 212-213 (TK), and R235. C154 serves as the catalytic Nucleophile. N317 provides a ligand contact to NAD(+).

This sequence belongs to the glyceraldehyde-3-phosphate dehydrogenase family. Epd subfamily. As to quaternary structure, homotetramer.

The protein localises to the cytoplasm. It carries out the reaction D-erythrose 4-phosphate + NAD(+) + H2O = 4-phospho-D-erythronate + NADH + 2 H(+). It participates in cofactor biosynthesis; pyridoxine 5'-phosphate biosynthesis; pyridoxine 5'-phosphate from D-erythrose 4-phosphate: step 1/5. Its function is as follows. Catalyzes the NAD-dependent conversion of D-erythrose 4-phosphate to 4-phosphoerythronate. The polypeptide is D-erythrose-4-phosphate dehydrogenase (Shewanella baltica (strain OS223)).